The primary structure comprises 454 residues: SH2 domain-containing protein 4A (454 aa).

4 disordered regions span residues A45–S65, E107–Y131, K152–S177, and R237–Q302. Basic and acidic residues predominate over residues E107 to E120. Phosphoserine occurs at positions 118 and 124. Residues K240–R259 show a composition bias toward basic and acidic residues. Phosphoserine is present on residues S261 and S315. Positions W347 to C440 constitute an SH2 domain.

Interacts with ESR1. As to expression, ubiquitously expressed. Aberrantly expressed in some cancers.

Its subcellular location is the cytoplasm. Inhibits estrogen-induced cell proliferation by competing with PLCG for binding to ESR1, blocking the effect of estrogen on PLCG and repressing estrogen-induced proliferation. May play a role in T-cell development and function. This Homo sapiens (Human) protein is SH2 domain-containing protein 4A (SH2D4A).